The sequence spans 263 residues: Diphthine synthase (263 aa).

Residues leucine 9, aspartate 84, methionine 87, 112–113 (SI), leucine 164, alanine 207, and histidine 232 each bind S-adenosyl-L-methionine.

The protein belongs to the diphthine synthase family. As to quaternary structure, homodimer.

The enzyme catalyses 2-[(3S)-amino-3-carboxypropyl]-L-histidyl-[translation elongation factor 2] + 3 S-adenosyl-L-methionine = diphthine-[translation elongation factor 2] + 3 S-adenosyl-L-homocysteine + 3 H(+). Its pathway is protein modification; peptidyl-diphthamide biosynthesis. In terms of biological role, S-adenosyl-L-methionine-dependent methyltransferase that catalyzes the trimethylation of the amino group of the modified target histidine residue in translation elongation factor 2 (EF-2), to form an intermediate called diphthine. The three successive methylation reactions represent the second step of diphthamide biosynthesis. The sequence is that of Diphthine synthase from Methanosphaera stadtmanae (strain ATCC 43021 / DSM 3091 / JCM 11832 / MCB-3).